Here is a 120-residue protein sequence, read N- to C-terminus: ATP-dependent Clp protease adapter protein ClpS (120 aa).

It belongs to the ClpS family. In terms of assembly, binds to the N-terminal domain of the chaperone ClpA.

Functionally, involved in the modulation of the specificity of the ClpAP-mediated ATP-dependent protein degradation. This is ATP-dependent Clp protease adapter protein ClpS from Pseudomonas savastanoi pv. phaseolicola (strain 1448A / Race 6) (Pseudomonas syringae pv. phaseolicola (strain 1448A / Race 6)).